A 157-amino-acid chain; its full sequence is Small ribosomal subunit protein uS7 (157 aa).

This sequence belongs to the universal ribosomal protein uS7 family. As to quaternary structure, part of the 30S ribosomal subunit. Contacts proteins S9 and S11.

In terms of biological role, one of the primary rRNA binding proteins, it binds directly to 16S rRNA where it nucleates assembly of the head domain of the 30S subunit. Is located at the subunit interface close to the decoding center, probably blocks exit of the E-site tRNA. The sequence is that of Small ribosomal subunit protein uS7 from Desulfotalea psychrophila (strain LSv54 / DSM 12343).